A 349-amino-acid chain; its full sequence is MSGWPHRHVLDLASFSREDFAAVLELAQRFRSLPITGARKLPALQGRLVATLFFEPSTRTRSSFELAAKRLSADVMSFSPSSSSLSKGESVLDTARTYVAMGADVLVVRHRSTGVPQQLAHDLQQMGERTVVLNGGDGLHSHPSQGLLDLLTLARFFSPRHPMPEALQGRRIVIVGDILHSRVARSNLWALSACGADVVLCGPPSLVPDDFAAFVDAPPPGLPEDPVPQRGKVSVVRRLEHALPGADAVMTLRLQKERMGQQLLTSLERYHRDFGLSHERMQLCGQNVPVLHPGPVNRGVELSGSLLDDPRCSLVEEQVRNGVPTRMALLYLMAASESAAEASLVSSSS.

Arginine 59 and threonine 60 together coordinate carbamoyl phosphate. Position 87 (lysine 87) interacts with L-aspartate. Carbamoyl phosphate-binding residues include arginine 109, histidine 142, and glutamine 145. L-aspartate-binding residues include arginine 182 and arginine 253. 2 residues coordinate carbamoyl phosphate: glycine 294 and proline 295.

This sequence belongs to the aspartate/ornithine carbamoyltransferase superfamily. ATCase family. As to quaternary structure, heterododecamer (2C3:3R2) of six catalytic PyrB chains organized as two trimers (C3), and six regulatory PyrI chains organized as three dimers (R2).

The enzyme catalyses carbamoyl phosphate + L-aspartate = N-carbamoyl-L-aspartate + phosphate + H(+). It participates in pyrimidine metabolism; UMP biosynthesis via de novo pathway; (S)-dihydroorotate from bicarbonate: step 2/3. Its function is as follows. Catalyzes the condensation of carbamoyl phosphate and aspartate to form carbamoyl aspartate and inorganic phosphate, the committed step in the de novo pyrimidine nucleotide biosynthesis pathway. This Synechococcus sp. (strain CC9605) protein is Aspartate carbamoyltransferase catalytic subunit.